A 119-amino-acid chain; its full sequence is ATP-dependent Clp protease adapter protein ClpS (119 aa).

The protein belongs to the ClpS family. As to quaternary structure, binds to the N-terminal domain of the chaperone ClpA.

Its function is as follows. Involved in the modulation of the specificity of the ClpAP-mediated ATP-dependent protein degradation. The protein is ATP-dependent Clp protease adapter protein ClpS of Marinobacter nauticus (strain ATCC 700491 / DSM 11845 / VT8) (Marinobacter aquaeolei).